The primary structure comprises 387 residues: MTTLTNLLDLDPAQLIAYCGELGEKPFRAKQLQRWIHQFGASDFDAMTDLAKSLRDKLATRAIIAAPAVISDHTSADGTRKWLVDVGQGNAVETVFIPEENRGTLCISTQAGCAVNCRFCSTGKQGFNRNLSVGEVIGQLWMAEFELRRTKGIEPGPKGERQITNVVMMGMGEPLLNYEPTVTALKLMLDDNAYGLSRRRVTLSTSGVVPMIDKLSQDCAVALAVSLHASNDALRDGLVPLNKKYPLVELMAACKRYLEFAPRDFVTFEYCMLDGVNDSDQHARELIALVRQADVPCKFNLIPFNPFPESGLTRSHNPRIKAFAQVLMDAGIVTTVRKTRGDDIDAACGQLAGEVQDRTRVQDRMKKMAEYQEKFGKNFGRIVEISS.

Glutamate 93 functions as the Proton acceptor in the catalytic mechanism. The Radical SAM core domain occupies 99 to 343 (EENRGTLCIS…TTVRKTRGDD (245 aa)). An intrachain disulfide couples cysteine 106 to cysteine 348. Cysteine 113, cysteine 117, and cysteine 120 together coordinate [4Fe-4S] cluster. Residues 172-173 (GE), serine 204, 226-228 (SLH), and asparagine 305 contribute to the S-adenosyl-L-methionine site. The S-methylcysteine intermediate role is filled by cysteine 348.

It belongs to the radical SAM superfamily. RlmN family. [4Fe-4S] cluster is required as a cofactor.

Its subcellular location is the cytoplasm. The catalysed reaction is adenosine(2503) in 23S rRNA + 2 reduced [2Fe-2S]-[ferredoxin] + 2 S-adenosyl-L-methionine = 2-methyladenosine(2503) in 23S rRNA + 5'-deoxyadenosine + L-methionine + 2 oxidized [2Fe-2S]-[ferredoxin] + S-adenosyl-L-homocysteine. The enzyme catalyses adenosine(37) in tRNA + 2 reduced [2Fe-2S]-[ferredoxin] + 2 S-adenosyl-L-methionine = 2-methyladenosine(37) in tRNA + 5'-deoxyadenosine + L-methionine + 2 oxidized [2Fe-2S]-[ferredoxin] + S-adenosyl-L-homocysteine. Its function is as follows. Specifically methylates position 2 of adenine 2503 in 23S rRNA and position 2 of adenine 37 in tRNAs. m2A2503 modification seems to play a crucial role in the proofreading step occurring at the peptidyl transferase center and thus would serve to optimize ribosomal fidelity. In Janthinobacterium sp. (strain Marseille) (Minibacterium massiliensis), this protein is Dual-specificity RNA methyltransferase RlmN.